Reading from the N-terminus, the 228-residue chain is 7-cyano-7-deazaguanine synthase (228 aa).

11–21 lines the ATP pocket; that stretch reads LSGGLDSATVL. 4 residues coordinate Zn(2+): C191, C201, C204, and C207.

This sequence belongs to the QueC family. Requires Zn(2+) as cofactor.

The enzyme catalyses 7-carboxy-7-deazaguanine + NH4(+) + ATP = 7-cyano-7-deazaguanine + ADP + phosphate + H2O + H(+). Its pathway is purine metabolism; 7-cyano-7-deazaguanine biosynthesis. In terms of biological role, catalyzes the ATP-dependent conversion of 7-carboxy-7-deazaguanine (CDG) to 7-cyano-7-deazaguanine (preQ(0)). This is 7-cyano-7-deazaguanine synthase from Magnetococcus marinus (strain ATCC BAA-1437 / JCM 17883 / MC-1).